A 237-amino-acid polypeptide reads, in one-letter code: MARRPRPAGSEPDSGIPHIVELVRSTIPPIHPAGLPFIAGGLGLAGLGVRNRWVRGTGLALAGACAGFFRHPPRVPPNRADVVVAAADGQVCLVDRAVPPPELGLPAEPLPRISIFLSVFDVHVQRVPVAGEATAVIHRSGQFLSADRAEASVANERNSVQIRTRTGHDVIVVQIAGLIARRIVCHAKVGDQLSIGDTYGLIRFGSRVDTYLPEGSKILVQQGQRAVGAETVLAELP.

The Schiff-base intermediate with substrate; via pyruvic acid role is filled by serine 206. Position 206 is a pyruvic acid (Ser); by autocatalysis (serine 206).

The protein belongs to the phosphatidylserine decarboxylase family. PSD-A subfamily. In terms of assembly, heterodimer of a large membrane-associated beta subunit and a small pyruvoyl-containing alpha subunit. Requires pyruvate as cofactor. Post-translationally, is synthesized initially as an inactive proenzyme. Formation of the active enzyme involves a self-maturation process in which the active site pyruvoyl group is generated from an internal serine residue via an autocatalytic post-translational modification. Two non-identical subunits are generated from the proenzyme in this reaction, and the pyruvate is formed at the N-terminus of the alpha chain, which is derived from the carboxyl end of the proenzyme. The post-translation cleavage follows an unusual pathway, termed non-hydrolytic serinolysis, in which the side chain hydroxyl group of the serine supplies its oxygen atom to form the C-terminus of the beta chain, while the remainder of the serine residue undergoes an oxidative deamination to produce ammonia and the pyruvoyl prosthetic group on the alpha chain.

It is found in the cell membrane. It carries out the reaction a 1,2-diacyl-sn-glycero-3-phospho-L-serine + H(+) = a 1,2-diacyl-sn-glycero-3-phosphoethanolamine + CO2. It functions in the pathway phospholipid metabolism; phosphatidylethanolamine biosynthesis; phosphatidylethanolamine from CDP-diacylglycerol: step 2/2. Its function is as follows. Catalyzes the formation of phosphatidylethanolamine (PtdEtn) from phosphatidylserine (PtdSer). This Mycobacteroides abscessus (strain ATCC 19977 / DSM 44196 / CCUG 20993 / CIP 104536 / JCM 13569 / NCTC 13031 / TMC 1543 / L948) (Mycobacterium abscessus) protein is Phosphatidylserine decarboxylase proenzyme.